A 249-amino-acid polypeptide reads, in one-letter code: tRNA (guanine-N(1)-)-methyltransferase (249 aa).

S-adenosyl-L-methionine contacts are provided by residues Gly112 and 132–137 (LGDFVL).

This sequence belongs to the RNA methyltransferase TrmD family. As to quaternary structure, homodimer.

The protein resides in the cytoplasm. The catalysed reaction is guanosine(37) in tRNA + S-adenosyl-L-methionine = N(1)-methylguanosine(37) in tRNA + S-adenosyl-L-homocysteine + H(+). Specifically methylates guanosine-37 in various tRNAs. The chain is tRNA (guanine-N(1)-)-methyltransferase from Citrifermentans bemidjiense (strain ATCC BAA-1014 / DSM 16622 / JCM 12645 / Bem) (Geobacter bemidjiensis).